The primary structure comprises 214 residues: GTP-binding nuclear protein GSP1/Ran (214 aa).

One can recognise a Small GTPase Ran-type domain in the interval 4-168; that stretch reads EVPTFKLVLV…LWLARKLAGN (165 aa). A GTP-binding site is contributed by 15–22; sequence DGGTGKTT. The tract at residues 34–42 is switch-I; the sequence is KKYIATIGV. GTP is bound by residues glycine 65, 119–122, and 147–149; these read NKVD and SAK. The tract at residues 65-81 is switch-II; that stretch reads GQEKFGGLRDGYYINAQ.

This sequence belongs to the small GTPase superfamily. Ran family. Found in a nuclear export complex with RanGTP, exportin and pre-miRNA.

The protein resides in the nucleus. GTP-binding protein involved in nucleocytoplasmic transport. Required for the import of protein into the nucleus and also for RNA export. Involved in chromatin condensation and control of cell cycle. The protein is GTP-binding nuclear protein GSP1/Ran (GSP1) of Eremothecium gossypii (strain ATCC 10895 / CBS 109.51 / FGSC 9923 / NRRL Y-1056) (Yeast).